Reading from the N-terminus, the 321-residue chain is Ribosomal RNA small subunit methyltransferase H (321 aa).

S-adenosyl-L-methionine is bound by residues 40–42 (GGH), Asp-60, Phe-84, Asp-106, and Gln-113.

It belongs to the methyltransferase superfamily. RsmH family.

The protein localises to the cytoplasm. It catalyses the reaction cytidine(1402) in 16S rRNA + S-adenosyl-L-methionine = N(4)-methylcytidine(1402) in 16S rRNA + S-adenosyl-L-homocysteine + H(+). In terms of biological role, specifically methylates the N4 position of cytidine in position 1402 (C1402) of 16S rRNA. The chain is Ribosomal RNA small subunit methyltransferase H from Pasteurella multocida (strain Pm70).